A 419-amino-acid chain; its full sequence is Serine/threonine-protein kinase Kist (419 aa).

A Protein kinase domain is found at Trp23–Phe303. ATP-binding positions include Leu29 to Val37 and Lys54. Catalysis depends on Asp158, which acts as the Proton acceptor. Positions Leu323–Pro405 constitute an RRM domain.

The protein belongs to the protein kinase superfamily. Ser/Thr protein kinase family. Interacts with PAM and CDKN1B/p27Kip1. Interacts with stathmin.

The protein resides in the nucleus. It catalyses the reaction L-seryl-[protein] + ATP = O-phospho-L-seryl-[protein] + ADP + H(+). It carries out the reaction L-threonyl-[protein] + ATP = O-phospho-L-threonyl-[protein] + ADP + H(+). In terms of biological role, upon serum stimulation, phosphorylates CDKN1B/p27Kip1, thus controlling CDKN1B subcellular location and cell cycle progression in G1 phase. May be involved in trafficking and/or processing of RNA. The chain is Serine/threonine-protein kinase Kist (Uhmk1) from Mus musculus (Mouse).